A 484-amino-acid chain; its full sequence is Chromosomal replication initiator protein DnaA (484 aa).

The domain I, interacts with DnaA modulators stretch occupies residues 1-73 (MQEGKNIWSL…EILIEKGHST (73 aa)). The domain II stretch occupies residues 73 to 140 (TINVEFIHSQ…EEIHIKYRNP (68 aa)). The segment at 141–357 (FLKKKYTFEN…AAVTKLKAHI (217 aa)) is domain III, AAA+ region. 4 residues coordinate ATP: Gly185, Gly187, Lys188, and Thr189. The tract at residues 358–484 (DLEDIEIDTN…IELMNKINKN (127 aa)) is domain IV, binds dsDNA.

Belongs to the DnaA family. In terms of assembly, oligomerizes as a right-handed, spiral filament on DNA at oriC.

The protein localises to the cytoplasm. In terms of biological role, plays an essential role in the initiation and regulation of chromosomal replication. ATP-DnaA binds to the origin of replication (oriC) to initiate formation of the DNA replication initiation complex once per cell cycle. Binds the DnaA box (a 9 base pair repeat at the origin) and separates the double-stranded (ds)DNA. Forms a right-handed helical filament on oriC DNA; dsDNA binds to the exterior of the filament while single-stranded (ss)DNA is stabiized in the filament's interior. The ATP-DnaA-oriC complex binds and stabilizes one strand of the AT-rich DNA unwinding element (DUE), permitting loading of DNA polymerase. After initiation quickly degrades to an ADP-DnaA complex that is not apt for DNA replication. Binds acidic phospholipids. The sequence is that of Chromosomal replication initiator protein DnaA from Borrelia duttonii (strain Ly).